Reading from the N-terminus, the 519-residue chain is Glutamate--cysteine ligase (519 aa).

This sequence belongs to the glutamate--cysteine ligase type 1 family. Type 1 subfamily.

The enzyme catalyses L-cysteine + L-glutamate + ATP = gamma-L-glutamyl-L-cysteine + ADP + phosphate + H(+). Its pathway is sulfur metabolism; glutathione biosynthesis; glutathione from L-cysteine and L-glutamate: step 1/2. The polypeptide is Glutamate--cysteine ligase (Photorhabdus laumondii subsp. laumondii (strain DSM 15139 / CIP 105565 / TT01) (Photorhabdus luminescens subsp. laumondii)).